Consider the following 194-residue polypeptide: A-type ATP synthase subunit E (194 aa).

A disordered region spans residues 35–56; the sequence is DAEADADQIREEREAEVERTIE. Residues 41 to 56 are compositionally biased toward basic and acidic residues; the sequence is DQIREEREAEVERTIE.

The protein belongs to the V-ATPase E subunit family. In terms of assembly, has multiple subunits with at least A(3), B(3), C, D, E, F, H, I and proteolipid K(x).

It is found in the cell membrane. Functionally, component of the A-type ATP synthase that produces ATP from ADP in the presence of a proton gradient across the membrane. The sequence is that of A-type ATP synthase subunit E from Haloarcula marismortui (strain ATCC 43049 / DSM 3752 / JCM 8966 / VKM B-1809) (Halobacterium marismortui).